The primary structure comprises 1270 residues: MSSHNPTQRVNFASIKNPMEYADFLDVQLKSFKDFLQLDTPPEKRKKEGLYKVFAENFPIHDTRNNFVLEFLDYYIDPPRYTLDECISRGLTYNVPLKAKMKLYCTDPEHEDFETVIQDVYLGPIPYMTESGTFIINGAERVVVSQMHRSPGVFFSESVHPNGTKLFSARIIPFKGSWIEFATDINNVMYAYIDRKKKLPVTTLLRAIGFETDKDILNLFGIAEEVKVSKSTLKKYYGRKIAARVLNSWIEDLVDEETGEVVSMERYDVIVDRDELLTEDNVDQIIESGAKNILITKDDSELGLDYSVTTNTLQKDPSNSEKEAVYHIYKQLRNQDPVDDASAREVINSLFFSEKRYDLGDVGRYRINKKLGINIDEETKVLTTEDITAIIAHLVELMNSKQVVDDIDHLSNRRVRTVGEQLYNQFGIGLARMARTVRERMNVRDNEVFTPIDLINAKTISSVVNSFFGTNALSQFMDRTNPLAEITHKRRLSSLGPGGLSRDRAGFEVRDVHYTHYGRLCPIETPEGPNIGLISSLCVYAKINDLGFISTPYRKVVDGKVDFSENGVEYYTAEAEDDKTVAQGNAPLDENGKFIKDAVYARYGSDFPVVSPSEIDLMDVSPIQIASIAASLIPFLEHDDANRALMGSNMMRQAVPLIHSDAPIVGTGVEQKLVHDSRTQIVAEGAGTVEFVDASVIKIRYDRSEDDTFVSFEDNLKIYNLPKFRKTNQSTTIDLRPICRKGDRVEKGDILTEGYSTENGELALGRNVQVAYMPWKGYNYEDAIVLNERMVREDIFTSVHVDEYILEVRETKRGLEELTSDIPNVSEEATKDLDDRGIIRVGARVHPGDILIGKITPKGESDPTPEEKLLHAIFGDKAGDVKDASLKANPSLSGVVIKTHLFSKAMHSKKDKGGVREIVKKLDEEMEEKLAELRELMLKKLIQLTDNKLSNGIRNFEDTEIVPKGVKLTPAVCSKIEFGEVAIFNWTGDEHTDELVAKLISNYLRKAKEIESEYRRKKFDATIGDELPNGIIQIAKVLIAKKRKIQVGDKMAGRHGNKGIVSKIVRQEDMPFMEDGTPMDLCLNPLGVPSRMNLGQIFELSSMGSRRLDVKFATPIFDGASLDDLDQWTDKAGIPRYGKTYLYDGGTGEQFDQPATVGVTYFLKLGHMVDDKMHARSIGPYSLITQQPLGGKAQFGGQRFGEMEVWALEAYGAAHVLQEMLTIKSDDVVGRSKAYEAIVKGAPMPTPGIPESLNVLLHELKGLGLSFCME.

This sequence belongs to the RNA polymerase beta chain family. The RNAP catalytic core consists of 2 alpha, 1 beta, 1 beta' and 1 omega subunit. When a sigma factor is associated with the core the holoenzyme is formed, which can initiate transcription.

The catalysed reaction is RNA(n) + a ribonucleoside 5'-triphosphate = RNA(n+1) + diphosphate. In terms of biological role, DNA-dependent RNA polymerase catalyzes the transcription of DNA into RNA using the four ribonucleoside triphosphates as substrates. The sequence is that of DNA-directed RNA polymerase subunit beta from Porphyromonas cangingivalis.